A 282-amino-acid chain; its full sequence is Homeobox-leucine zipper protein HAT1 (282 aa).

A disordered region spans residues 71–134 (LEEETGVSSP…EEDYGGETCR (64 aa)). Positions 76-89 (GVSSPNSTISSTVS) are enriched in low complexity. Positions 132–191 (TCRKKLRLSKDQSAVLEDTFKEHNTLNPKQKLALAKKLGLTARQVEVWFQNRRARTKLKQ) form a DNA-binding region, homeobox. The leucine-zipper stretch occupies residues 199–220 (LKRCVEKLTEENRRLEKEAAEL).

It belongs to the HD-ZIP homeobox family. Class II subfamily. In terms of assembly, interacts with BZIP30.

The protein localises to the nucleus. Functionally, probable transcription factor. The chain is Homeobox-leucine zipper protein HAT1 (HAT1) from Arabidopsis thaliana (Mouse-ear cress).